Reading from the N-terminus, the 755-residue chain is Atypical kinase coq-8, mitochondrial (755 aa).

Positions 57-78 (QDVDPLKEPNKTNAPLLSPTLP) are disordered. Over residues 67–78 (KTNAPLLSPTLP) the composition is skewed to polar residues. Residues 435–443 (FACASIGQV) and K457 contribute to the ATP site. The Proton acceptor role is filled by D587.

It belongs to the protein kinase superfamily. ADCK protein kinase family.

Its subcellular location is the mitochondrion. The protein operates within cofactor biosynthesis; ubiquinone biosynthesis. Atypical kinase involved in the biosynthesis of coenzyme Q, also named ubiquinone, an essential lipid-soluble electron transporter for aerobic cellular respiration. Its substrate specificity is still unclear: may act as a protein kinase that mediates phosphorylation of coq-3. According to other reports, acts as a small molecule kinase, possibly a lipid kinase that phosphorylates a prenyl lipid in the ubiquinone biosynthesis pathway, as suggested by its ability to bind coenzyme Q lipid intermediates. The protein is Atypical kinase coq-8, mitochondrial (coq-8) of Caenorhabditis elegans.